The primary structure comprises 399 residues: Ribonuclease D (399 aa).

Residues 31–197 (RVVTDNTALL…PLYHILEKEL (167 aa)) enclose the 3'-5' exonuclease domain. In terms of domain architecture, HRDC spans 239 to 318 (NPLELSRLRV…SQARRISSND (80 aa)).

It belongs to the RNase D family. Requires a divalent metal cation as cofactor.

It is found in the cytoplasm. It carries out the reaction Exonucleolytic cleavage that removes extra residues from the 3'-terminus of tRNA to produce 5'-mononucleotides.. In terms of biological role, exonuclease involved in the 3' processing of various precursor tRNAs. Initiates hydrolysis at the 3'-terminus of an RNA molecule and releases 5'-mononucleotides. This chain is Ribonuclease D, found in Haemophilus influenzae (strain ATCC 51907 / DSM 11121 / KW20 / Rd).